A 398-amino-acid chain; its full sequence is 1-deoxy-D-xylulose 5-phosphate reductoisomerase (398 aa).

Threonine 11, glycine 12, serine 13, isoleucine 14, and asparagine 125 together coordinate NADPH. Lysine 126 contributes to the 1-deoxy-D-xylulose 5-phosphate binding site. Glutamate 127 is a binding site for NADPH. Residue aspartate 151 participates in Mn(2+) binding. 1-deoxy-D-xylulose 5-phosphate-binding residues include serine 152, glutamate 153, serine 186, and histidine 209. Glutamate 153 lines the Mn(2+) pocket. Glycine 215 serves as a coordination point for NADPH. 1-deoxy-D-xylulose 5-phosphate is bound by residues serine 222, asparagine 227, lysine 228, and glutamate 231. Mn(2+) is bound at residue glutamate 231.

It belongs to the DXR family. Mg(2+) is required as a cofactor. It depends on Mn(2+) as a cofactor.

The catalysed reaction is 2-C-methyl-D-erythritol 4-phosphate + NADP(+) = 1-deoxy-D-xylulose 5-phosphate + NADPH + H(+). The protein operates within isoprenoid biosynthesis; isopentenyl diphosphate biosynthesis via DXP pathway; isopentenyl diphosphate from 1-deoxy-D-xylulose 5-phosphate: step 1/6. Catalyzes the NADPH-dependent rearrangement and reduction of 1-deoxy-D-xylulose-5-phosphate (DXP) to 2-C-methyl-D-erythritol 4-phosphate (MEP). This Acinetobacter baumannii (strain ATCC 17978 / DSM 105126 / CIP 53.77 / LMG 1025 / NCDC KC755 / 5377) protein is 1-deoxy-D-xylulose 5-phosphate reductoisomerase.